Consider the following 464-residue polypeptide: ATP synthase subunit beta (464 aa).

Residue glycine 153–threonine 160 participates in ATP binding.

The protein belongs to the ATPase alpha/beta chains family. In terms of assembly, F-type ATPases have 2 components, CF(1) - the catalytic core - and CF(0) - the membrane proton channel. CF(1) has five subunits: alpha(3), beta(3), gamma(1), delta(1), epsilon(1). CF(0) has three main subunits: a(1), b(2) and c(9-12). The alpha and beta chains form an alternating ring which encloses part of the gamma chain. CF(1) is attached to CF(0) by a central stalk formed by the gamma and epsilon chains, while a peripheral stalk is formed by the delta and b chains.

It localises to the cell inner membrane. The enzyme catalyses ATP + H2O + 4 H(+)(in) = ADP + phosphate + 5 H(+)(out). Produces ATP from ADP in the presence of a proton gradient across the membrane. The catalytic sites are hosted primarily by the beta subunits. This is ATP synthase subunit beta from Burkholderia cenocepacia (strain ATCC BAA-245 / DSM 16553 / LMG 16656 / NCTC 13227 / J2315 / CF5610) (Burkholderia cepacia (strain J2315)).